The following is a 514-amino-acid chain: 2,3-bisphosphoglycerate-independent phosphoglycerate mutase (514 aa).

Residues Asp13 and Ser63 each coordinate Mn(2+). Ser63 serves as the catalytic Phosphoserine intermediate. Substrate is bound by residues His124, 154–155 (RD), Arg186, Arg192, 258–261 (RADR), and Lys332. Mn(2+) is bound by residues Asp399, His403, Asp440, His441, and His459.

This sequence belongs to the BPG-independent phosphoglycerate mutase family. Monomer. It depends on Mn(2+) as a cofactor.

The enzyme catalyses (2R)-2-phosphoglycerate = (2R)-3-phosphoglycerate. The protein operates within carbohydrate degradation; glycolysis; pyruvate from D-glyceraldehyde 3-phosphate: step 3/5. In terms of biological role, catalyzes the interconversion of 2-phosphoglycerate and 3-phosphoglycerate. This Legionella pneumophila (strain Corby) protein is 2,3-bisphosphoglycerate-independent phosphoglycerate mutase.